The chain runs to 188 residues: Myc target protein 1 (188 aa).

A helical membrane pass occupies residues 24-44 (FTVSVAIGLAIGGFLWALFVF). Residues 47–65 (RRRRASAPISQWSPTRRPR) carry the Bipartite nuclear localization signal motif. Serine 87, serine 90, serine 93, and serine 101 each carry phosphoserine.

This sequence belongs to the MYCT1 family. In terms of tissue distribution, highly expressed in lung, heart, and skeletal muscle. Expressed in brain, eye, liver, kidney, smooth muscle, pancreas, thyroid, thymus, submaxillary gland, spleen, testis, ovary, prostate, epididymis, and uterus. Deregulated expression promotes apoptosis in response to growth factor deprivation. Overexpression in synergy with CCNB1 may promote genomic instability.

The protein localises to the nucleus membrane. May regulate certain MYC target genes, MYC seems to be a direct upstream transcriptional activator. Does not seem to significantly affect growth cell capacity. Overexpression seems to mediate many of the known phenotypic features associated with MYC, including promotion of apoptosis, alteration of morphology, enhancement of anchorage-independent growth, tumorigenic conversion, promotion of genomic instability and inhibition of hematopoietic differentiation. The sequence is that of Myc target protein 1 (Myct1) from Mus musculus (Mouse).